Consider the following 330-residue polypeptide: Embigin (330 aa).

An N-terminal signal peptide occupies residues 1 to 33; sequence MRSHTGLRALVAPGYPLLLLCLLAATRPDPAEG. Residues 34–254 are Extracellular-facing; that stretch reads DPTDPTFTSL…QLGESEEQNE (221 aa). Ig-like V-type domains follow at residues 38–161 and 162–256; these read PTFT…IHVP and KAHG…NELV. Asn-55, Asn-62, Asn-70, Asn-101, Asn-118, Asn-191, Asn-198, Asn-216, and Asn-221 each carry an N-linked (GlcNAc...) asparagine glycan. 2 disulfides stabilise this stretch: Cys-89–Cys-145 and Cys-182–Cys-240. A helical transmembrane segment spans residues 255–283; it reads LVVLSFLVPLKPFLAILAEVILLVAIILL. At 284–330 the chain is on the cytoplasmic side; the sequence is CEVYTHKKKNDPDAGKEFEQIEQLKSDDSNGIENNVPRYRKTDSADQ. The segment covering 293-311 has biased composition (basic and acidic residues); the sequence is NDPDAGKEFEQIEQLKSDD. Positions 293-330 are disordered; it reads NDPDAGKEFEQIEQLKSDDSNGIENNVPRYRKTDSADQ. Residue Ser-312 is modified to Phosphoserine.

As to quaternary structure, interacts with SLC16A1, SLC16A6 and SLC16A7. As to expression, only member of the immunoglobulin superfamily to be expressed in embryonal carcinoma cells, which resemble multipotential cells of early embryos.

It is found in the cell membrane. The protein localises to the synapse. Functionally, plays a role in targeting the monocarboxylate transporters SLC16A1, SLC16A6 and SLC16A7 to the cell membrane. Plays a role in the outgrowth of motoneurons and in the formation of neuromuscular junctions. Following muscle denervation, promotes nerve terminal sprouting and the formation of additional acetylcholine receptor clusters at synaptic sites without affecting terminal Schwann cell number or morphology. Delays the retraction of terminal sprouts following re-innervation of denervated endplates. The protein is Embigin (Emb) of Mus musculus (Mouse).